A 62-amino-acid chain; its full sequence is UPF0339 protein Atu5359 (62 aa).

The protein belongs to the UPF0339 family.

This chain is UPF0339 protein Atu5359, found in Agrobacterium fabrum (strain C58 / ATCC 33970) (Agrobacterium tumefaciens (strain C58)).